We begin with the raw amino-acid sequence, 1120 residues long: Transcription-repair-coupling factor (1120 aa).

Residues D591–I756 form the Helicase ATP-binding domain. Position 604-611 (G604–T611) interacts with ATP. The short motif at D709 to Q712 is the DEEQ box element. A Helicase C-terminal domain is found at I777–R933.

This sequence in the N-terminal section; belongs to the UvrB family. In the C-terminal section; belongs to the helicase family. RecG subfamily.

It is found in the cytoplasm. In terms of biological role, couples transcription and DNA repair by recognizing RNA polymerase (RNAP) stalled at DNA lesions. Mediates ATP-dependent release of RNAP and its truncated transcript from the DNA, and recruitment of nucleotide excision repair machinery to the damaged site. The sequence is that of Transcription-repair-coupling factor from Rickettsia typhi (strain ATCC VR-144 / Wilmington).